Reading from the N-terminus, the 31-residue chain is Cycloviolacin-O6 (31 aa).

Positions 1–31 (GTLPCGESCVWIPCISAAVGCSCKSKVCYKN) form a cross-link, cyclopeptide (Gly-Asn). Disulfide bonds link Cys-5/Cys-21, Cys-9/Cys-23, and Cys-14/Cys-28.

In terms of processing, this is a cyclic peptide.

Probably participates in a plant defense mechanism. This is Cycloviolacin-O6 from Viola odorata (Sweet violet).